A 29-amino-acid polypeptide reads, in one-letter code: Frontoxin VI (29 aa).

Cysteines 3 and 24 form a disulfide.

As to expression, expressed by the venom gland.

The protein localises to the secreted. Functionally, binds to muscle nicotinic acetylcholine receptor (nAChR) and inhibit acetylcholine from binding to the receptor, thereby impairing neuromuscular transmission. The polypeptide is Frontoxin VI (Micrurus frontalis (Coral snake)).